Consider the following 67-residue polypeptide: Kappa-conotoxin-like 1 (67 aa).

An N-terminal signal peptide occupies residues 1–26; sequence MMFRLTSVSCFLLVIACLNLFQVVLT. Disulfide bonds link C29-C43, C36-C48, C42-C51, and C47-C55. Position 59 is an isoleucine amide (I59). A propeptide spanning residues 63-67 is cleaved from the precursor; the sequence is ATFQE.

The protein belongs to the conotoxin I2 superfamily. In terms of tissue distribution, expressed by the venom duct.

It is found in the secreted. Inhibits the vertebrate voltage-gated potassium channels Kv1.1/KCNA1 and Kv1.3/KCNA3. The polypeptide is Kappa-conotoxin-like 1 (Conus vexillum (Flag cone)).